We begin with the raw amino-acid sequence, 241 residues long: NEP1-interacting protein 2 (241 aa).

Positions 1–20 (MASSSSSSYRFQSGSYPLSS) are disordered. The Lumenal, thylakoid segment spans residues 1–36 (MASSSSSSYRFQSGSYPLSSSPSLGNFVERIKDACH). The chain crosses the membrane as a helical span at residues 37 to 57 (FLVSAVLGTIISAILTFFFAL). Residues 58 to 76 (VGTLLGALTGALIGQETES) lie on the Stromal side of the membrane. The helical transmembrane segment at 77-97 (GFIRGAAIGAISGAVFSIEVF) threads the bilayer. Topologically, residues 98–109 (ESSLDLWKSDES) are lumenal, thylakoid. Residues 110 to 130 (GFGCFLYLIDVIVSLLSGRLV) form a helical membrane-spanning segment. The Stromal segment spans residues 131 to 241 (RERIGPAMLS…GSCPMCRRDI (111 aa)). Residues 196–238 (CSVCLQDFQLGETVRSLPHCHHMFHLPCIDNWLLRHGSCPMCR) form an RING-type; atypical zinc finger.

Belongs to the RING-type zinc finger family. NIP subfamily. Interacts with RPOT2.

The protein resides in the plastid. It is found in the chloroplast thylakoid membrane. Its function is as follows. Intrinsic thylakoid membrane protein that fixes RPOT2 on the stromal side of the thylakoid membrane. This chain is NEP1-interacting protein 2 (NIP2), found in Arabidopsis thaliana (Mouse-ear cress).